Here is a 433-residue protein sequence, read N- to C-terminus: Malate synthase (433 aa).

Residue 16–17 participates in acetyl-CoA binding; sequence TS. D52 contributes to the Mg(2+) binding site. R84 is an acetyl-CoA binding site. Glyoxylate is bound by residues R84, E158, and 191–192; that span reads VD. 2 residues coordinate Mg(2+): E158 and D192. 2 residues coordinate acetyl-CoA: R236 and L259. Residue D388 is the Proton acceptor of the active site.

The protein belongs to the HpcH/HpaI aldolase family. As to quaternary structure, homotrimer and homohexamer in equilibrium. The cofactor is Mg(2+).

The protein resides in the cytoplasm. It catalyses the reaction glyoxylate + acetyl-CoA + H2O = (S)-malate + CoA + H(+). The protein operates within carbohydrate metabolism; glyoxylate cycle; (S)-malate from isocitrate: step 2/2. Functionally, involved in the glyoxylate cycle which synthesizes precursors for carbohydrates from C2 compounds such as acetate. Catalyzes the Claisen condensation between acetyl-coenzyme A (acetyl-CoA) and glyoxylate to form the malyl-CoA intermediate that is subsequently hydrolyzed to produce malate and CoA. This chain is Malate synthase (aceB), found in Haloferax volcanii (strain ATCC 29605 / DSM 3757 / JCM 8879 / NBRC 14742 / NCIMB 2012 / VKM B-1768 / DS2) (Halobacterium volcanii).